We begin with the raw amino-acid sequence, 74 residues long: MKQDTHPDYHFITVVMTDGTTYKTRSTLGKEGDTLNLDIDPKTHPAWTGGGHQLLDRGGRVSRFNAKFGAFTRK.

It belongs to the bacterial ribosomal protein bL31 family. Type A subfamily. As to quaternary structure, part of the 50S ribosomal subunit.

Functionally, binds the 23S rRNA. This Phenylobacterium zucineum (strain HLK1) protein is Large ribosomal subunit protein bL31.